A 200-amino-acid polypeptide reads, in one-letter code: Nascent polypeptide-associated complex subunit alpha (200 aa).

Positions 1–19 (MADPRVEELPEEEVKKTQV) are enriched in basic and acidic residues. Disordered stretches follow at residues 1-54 (MADP…NEKK) and 118-165 (AAQQ…EDKD). Residues 20 to 34 (EDLDNSSDDESDIEA) show a composition bias toward acidic residues. Residues 49 to 114 (SRNEKKARKA…AKIEDLNASA (66 aa)) enclose the NAC-A/B domain. Basic and acidic residues predominate over residues 127 to 146 (AEHDHAGHTHEHEEAGKAKE). Over residues 147–160 (EEEEDEGEEVDAEG) the composition is skewed to acidic residues. The 40-residue stretch at 161–200 (IEDKDIELVMTQANVSRKKAIKALKENDNDIVNSIMALSI) folds into the UBA domain.

The protein belongs to the NAC-alpha family. Part of the nascent polypeptide-associated complex (NAC), consisting of npc-1/egd2 and npc-2/egd1. NAC associates with ribosomes via npc-2/egd1.

Its subcellular location is the cytoplasm. It localises to the nucleus. Its function is as follows. Component of the nascent polypeptide-associated complex (NAC), a dynamic component of the ribosomal exit tunnel, protecting the emerging polypeptides from interaction with other cytoplasmic proteins to ensure appropriate nascent protein targeting. The NAC complex also promotes mitochondrial protein import by enhancing productive ribosome interactions with the outer mitochondrial membrane and blocks the inappropriate interaction of ribosomes translating non-secretory nascent polypeptides with translocation sites in the membrane of the endoplasmic reticulum. Npc-1/egd2 may also be involved in transcription regulation. This chain is Nascent polypeptide-associated complex subunit alpha (npc-1), found in Neurospora crassa (strain ATCC 24698 / 74-OR23-1A / CBS 708.71 / DSM 1257 / FGSC 987).